We begin with the raw amino-acid sequence, 188 residues long: dCTP deaminase (188 aa).

Residues Lys111–Arg116, Thr135–Glu137, Gln156, Tyr170, and Gln180 each bind dCTP. Catalysis depends on Glu137, which acts as the Proton donor/acceptor.

The protein belongs to the dCTP deaminase family. As to quaternary structure, homotrimer.

It carries out the reaction dCTP + H2O + H(+) = dUTP + NH4(+). Its pathway is pyrimidine metabolism; dUMP biosynthesis; dUMP from dCTP (dUTP route): step 1/2. Functionally, catalyzes the deamination of dCTP to dUTP. The sequence is that of dCTP deaminase from Pseudomonas syringae pv. tomato (strain ATCC BAA-871 / DC3000).